The following is a 165-amino-acid chain: UI (165 aa).

The N-terminal stretch at 1-18 (MKPVPLILLLATVLLSSH) is a signal peptide. Val163 carries the valine amide modification.

Belongs to the sauvagine/corticotropin-releasing factor/urotensin I family.

It localises to the secreted. Functionally, urotensin is found in the teleost caudal neurosecretory system. It has a suggested role in osmoregulation and as a corticotropin-releasing factor. The non-hormonal portion of this precursor may be a urotensin binding protein, urophysin. This chain is UI, found in Oncorhynchus mykiss (Rainbow trout).